A 107-amino-acid polypeptide reads, in one-letter code: Ig kappa chain V-VI region J539 (107 aa).

Residues 1-23 (EIVLTQSPAITAASLGQKVTITC) form a framework-1 region. Cysteines 23 and 87 form a disulfide. Residues 24 to 33 (SASSSVSSLH) are complementarity-determining-1. Positions 34 to 48 (WYQQKSGTSPKPWIY) are framework-2. The interval 49–55 (EISKLAS) is complementarity-determining-2. The segment at 56 to 87 (GVPARFSGSGSGTSYSLTINTMEAEDAAIYYC) is framework-3. The interval 88–96 (QQWTYPLIT) is complementarity-determining-3. Residues 97 to 106 (FGAGTKLELK) form a framework-4 region.

The sequence is that of Ig kappa chain V-VI region J539 from Mus musculus (Mouse).